The following is a 128-amino-acid chain: Nascent polypeptide-associated complex protein (128 aa).

Positions 8 to 75 (PRMLKKMQKM…PKKIKKEKVE (68 aa)) constitute an NAC-A/B domain.

The protein belongs to the NAC-alpha family. In terms of assembly, homodimer. Interacts with the ribosome. Binds ribosomal RNA.

In terms of biological role, contacts the emerging nascent chain on the ribosome. The sequence is that of Nascent polypeptide-associated complex protein from Methanocaldococcus jannaschii (strain ATCC 43067 / DSM 2661 / JAL-1 / JCM 10045 / NBRC 100440) (Methanococcus jannaschii).